A 337-amino-acid polypeptide reads, in one-letter code: 15-cis-phytoene synthase (337 aa).

The protein belongs to the phytoene/squalene synthase family. Requires ATP as cofactor. Mn(2+) serves as cofactor. It depends on Mg(2+) as a cofactor.

The catalysed reaction is 2 (2E,6E,10E)-geranylgeranyl diphosphate = 15-cis-phytoene + 2 diphosphate. The protein operates within carotenoid biosynthesis; phytoene biosynthesis. Functionally, involved in the biosynthesis of carotenoids. Catalyzes the condensation of two molecules of geranylgeranyl diphosphate (GGPP) to give prephytoene diphosphate (PPPP) and the subsequent rearrangement of the cyclopropylcarbinyl intermediate to yield 15-cis-phytoene. This chain is 15-cis-phytoene synthase (crtB), found in Synechocystis sp. (strain ATCC 27184 / PCC 6803 / Kazusa).